The sequence spans 254 residues: Winged helix repair factor 1 (254 aa).

The Bipartite nuclear localization signal signature appears at 4–21; the sequence is KRHHLIPETFGVKRRRKR. 3 winged helix domain regions span residues 32–104, 120–179, and 180–254; these read EPGS…GIIF, PYAG…LAVP, and GAGR…LPET.

The protein belongs to the STK19 family. Monomer in solution. Homodimer; when bound to DNA. Component of a transcription-coupled nucleotide excision repair (TC-NER) complex composed of STK19, ERCC6, ERCC8, DDA1, DDB1, ELOF1 and UVSSA which assembles and interacts with the multiprotein RNA polymerase II complex when it stalls at DNA lesions. As to expression, monocytes, hepatocytes, epithelial cells, T- and B-lymphocytes.

The protein localises to the nucleus. The protein resides in the cytoplasm. Its function is as follows. DNA-binding protein which is required for efficient transcription-coupled nucleotide excision repair (TC-NER). Acts as part of a TC-NER complex which assembles and interacts with RNA polymerase II (RNAPII) when it stalls at DNA lesions. TC-NER complex subunit UVSSA binds to the GTF2H1/p62 subunit of the TFIIH transcription factor complex, tethering TFIIH to the TC-NER complex. WHR1/STK19 then interacts with the XPD helicase subunit of TFIIH which guides TFIIH to DNA downstream of the stalled RNAPII, ensuring DNA repair. Directly interacts with RNAPII and also binds to downstream DNA. Promotes the timely removal of DNA damage-stalled RNAPII, allowing downstream NER factors to access DNA lesions. Required for monoubiquitination of UVSSA. Regulates repositioning and stabilization of UVSSA within the TC-NER complex. Stimulates ubiquitination of RNAPII complex member RBP1. Also binds to RNA and regulates the expression levels of many mRNAs. This chain is Winged helix repair factor 1, found in Homo sapiens (Human).